Reading from the N-terminus, the 474-residue chain is Light-independent protochlorophyllide reductase subunit N (474 aa).

Cys22, Cys47, and Cys107 together coordinate [4Fe-4S] cluster.

This sequence belongs to the BchN/ChlN family. Protochlorophyllide reductase is composed of three subunits; ChlL, ChlN and ChlB. Forms a heterotetramer of two ChlB and two ChlN subunits. [4Fe-4S] cluster serves as cofactor.

It localises to the plastid. It is found in the chloroplast. It catalyses the reaction chlorophyllide a + oxidized 2[4Fe-4S]-[ferredoxin] + 2 ADP + 2 phosphate = protochlorophyllide a + reduced 2[4Fe-4S]-[ferredoxin] + 2 ATP + 2 H2O. It participates in porphyrin-containing compound metabolism; chlorophyll biosynthesis (light-independent). In terms of biological role, component of the dark-operative protochlorophyllide reductase (DPOR) that uses Mg-ATP and reduced ferredoxin to reduce ring D of protochlorophyllide (Pchlide) to form chlorophyllide a (Chlide). This reaction is light-independent. The NB-protein (ChlN-ChlB) is the catalytic component of the complex. The sequence is that of Light-independent protochlorophyllide reductase subunit N from Physcomitrium patens (Spreading-leaved earth moss).